We begin with the raw amino-acid sequence, 49 residues long: Large ribosomal subunit protein bL33B (49 aa).

Belongs to the bacterial ribosomal protein bL33 family.

This is Large ribosomal subunit protein bL33B from Bacillus pumilus (strain SAFR-032).